We begin with the raw amino-acid sequence, 75 residues long: Small ribosomal subunit protein bS18 (75 aa).

It belongs to the bacterial ribosomal protein bS18 family. Part of the 30S ribosomal subunit. Forms a tight heterodimer with protein bS6.

Functionally, binds as a heterodimer with protein bS6 to the central domain of the 16S rRNA, where it helps stabilize the platform of the 30S subunit. The protein is Small ribosomal subunit protein bS18 of Shewanella amazonensis (strain ATCC BAA-1098 / SB2B).